Here is a 397-residue protein sequence, read N- to C-terminus: 3-hydroxy-3-methylglutaryl-coenzyme A reductase (397 aa).

Residues E96 and D301 each act as charge relay system in the active site. H391 serves as the catalytic Proton donor.

The protein belongs to the HMG-CoA reductase family.

It carries out the reaction (R)-mevalonate + 2 NADP(+) + CoA = (3S)-3-hydroxy-3-methylglutaryl-CoA + 2 NADPH + 2 H(+). Its pathway is metabolic intermediate biosynthesis; (R)-mevalonate biosynthesis; (R)-mevalonate from acetyl-CoA: step 3/3. Functionally, converts HMG-CoA to mevalonate. The sequence is that of 3-hydroxy-3-methylglutaryl-coenzyme A reductase (hmgA) from Methanothermobacter thermautotrophicus (strain ATCC 29096 / DSM 1053 / JCM 10044 / NBRC 100330 / Delta H) (Methanobacterium thermoautotrophicum).